Here is a 96-residue protein sequence, read N- to C-terminus: MLMMDTLYDWLIDGFTWLVIKLGIMWIESKIFVIQFFWEMSQKVIDMFTIYPLIQQAIDMLPPQYSGFLFFLGLDQALAIVLQALMTRFALRALNL.

Residues 76–96 traverse the membrane as a helical segment; sequence QALAIVLQALMTRFALRALNL.

It localises to the secreted. The protein resides in the host cell membrane. Functionally, increases short-circuit current in rabbit ileal tissue mounted in Ussing chambers, by increasing the potential difference. Cultures of V.cholerae containing the cloned ace gene cause fluid secretion in ligated rabbit ileal loops. The protein is Accessory cholera enterotoxin (ace) of Vibrio cholerae serotype O1 (strain ATCC 39315 / El Tor Inaba N16961).